The primary structure comprises 247 residues: Probable transcriptional regulatory protein HRM2_04000 (247 aa).

This sequence belongs to the TACO1 family.

It localises to the cytoplasm. This Desulforapulum autotrophicum (strain ATCC 43914 / DSM 3382 / VKM B-1955 / HRM2) (Desulfobacterium autotrophicum) protein is Probable transcriptional regulatory protein HRM2_04000.